The primary structure comprises 372 residues: NAD(P)H-quinone oxidoreductase subunit 1 (372 aa).

Helical transmembrane passes span 29–49 (WIPF…LVVV), 97–117 (WLFT…YLIV), 130–150 (VGIF…LMAG), 176–196 (LALS…IDIV), 204–224 (ILGW…IAAL), 254–274 (FALF…VFAI), 308–328 (SLGI…AVLM), and 347–367 (FLLP…LAFP).

Belongs to the complex I subunit 1 family. NDH-1 is composed of at least 11 different subunits.

Its subcellular location is the cellular thylakoid membrane. The enzyme catalyses a plastoquinone + NADH + (n+1) H(+)(in) = a plastoquinol + NAD(+) + n H(+)(out). It catalyses the reaction a plastoquinone + NADPH + (n+1) H(+)(in) = a plastoquinol + NADP(+) + n H(+)(out). NDH-1 shuttles electrons from an unknown electron donor, via FMN and iron-sulfur (Fe-S) centers, to quinones in the respiratory and/or the photosynthetic chain. The immediate electron acceptor for the enzyme in this species is believed to be plastoquinone. Couples the redox reaction to proton translocation, and thus conserves the redox energy in a proton gradient. The chain is NAD(P)H-quinone oxidoreductase subunit 1 from Crocosphaera subtropica (strain ATCC 51142 / BH68) (Cyanothece sp. (strain ATCC 51142)).